The following is a 763-amino-acid chain: Protein CHROMATIN REMODELING 19 (763 aa).

Disordered regions lie at residues 1 to 43 (MKRD…TPSI) and 114 to 149 (EDEE…RGED). Residues 23-34 (VLKRPRTPKKTR) show a composition bias toward basic residues. The span at 114–135 (EDEEASDDDDDEAESSASEDEF) shows a compositional bias: acidic residues. The region spanning 226 to 404 (LLYKKGIEGA…WSLLEFMLPD (179 aa)) is the Helicase ATP-binding domain. 239-246 (DEMGLGKT) contacts ATP. Residues 353-356 (DEAH) carry the DEAH box motif. Positions 462–482 (RKQEDAYKEAIEEYRAASQAR) form a coiled coil. Positions 520 to 527 (IRRIYSDE) match the Nuclear localization signal motif. The Helicase C-terminal domain occupies 592–742 (TLAELLPSMK…AAVLESGVHV (151 aa)).

The protein belongs to the SNF2/RAD54 helicase family. Interacts with SUVR2 and itself.

The protein localises to the nucleus. Its function is as follows. DNA helicase that possesses intrinsic ATP-dependent nucleosome-remodeling activity and is both required for DNA repair and heterochromatin organization. Promotes DNA end resection of double-strand breaks (DSBs) following DNA damage: probably acts by weakening histone DNA interactions in nucleosomes flanking DSBs. Probable chromatin remodeling factor. Probable helicase-like transcription factor involved in transcriptional gene silencing. Associates with SUVR2 and contributes to transcriptional gene silencing at RNA-directed DNA methylation (RdDM) target loci but also at RdDM-independent target loci. May be involved in nucleosome positioning to form ordered nucleosome arrays on chromatin. The chain is Protein CHROMATIN REMODELING 19 from Arabidopsis thaliana (Mouse-ear cress).